The sequence spans 377 residues: Probable riboflavin import permease protein RfuC (377 aa).

Transmembrane regions (helical) follow at residues 4–24 (VINS…VIVL), 49–69 (ALFH…CALK), 72–92 (MINL…ALLL), 98–118 (VGFL…AGIL), 135–155 (ITSF…IITV), 182–202 (FGVP…GCFF), 223–245 (FVGF…LFGL), 249–268 (FSVV…GMGY), 274–294 (ALIA…FAWM), and 303–323 (LGAH…FLLI).

Belongs to the binding-protein-dependent transport system permease family. In terms of assembly, the complex is probably composed of two ATP-binding proteins (RfuB), two transmembrane proteins (RfuC and RfuD) and a solute-binding protein (RfuA).

It localises to the cell inner membrane. Probably part of the ABC transporter complex RfuABCD involved in riboflavin import. Probably responsible for the translocation of the substrate across the membrane. This Treponema pallidum (strain Nichols) protein is Probable riboflavin import permease protein RfuC.